The following is a 180-amino-acid chain: Sec-independent protein translocase protein TatB (180 aa).

The helical transmembrane segment at 1–21 (MFDIGWSELLVIGVVALIAIG) threads the bilayer. The disordered stretch occupies residues 77–180 (TRGDLMTRLT…DQTARGAKAS (104 aa)). Residues 105–129 (ADKPSVSSDAASASGSAAPEAGAAE) show a composition bias toward low complexity.

Belongs to the TatB family. As to quaternary structure, the Tat system comprises two distinct complexes: a TatABC complex, containing multiple copies of TatA, TatB and TatC subunits, and a separate TatA complex, containing only TatA subunits. Substrates initially bind to the TatABC complex, which probably triggers association of the separate TatA complex to form the active translocon.

It localises to the cell inner membrane. Part of the twin-arginine translocation (Tat) system that transports large folded proteins containing a characteristic twin-arginine motif in their signal peptide across membranes. Together with TatC, TatB is part of a receptor directly interacting with Tat signal peptides. TatB may form an oligomeric binding site that transiently accommodates folded Tat precursor proteins before their translocation. This chain is Sec-independent protein translocase protein TatB, found in Nitrobacter winogradskyi (strain ATCC 25391 / DSM 10237 / CIP 104748 / NCIMB 11846 / Nb-255).